Reading from the N-terminus, the 944-residue chain is LPS-assembly protein LptD (944 aa).

Positions 1-33 (MALKSPAFRRKFPLLVTGGLLALQPLATSFVVA) are cleaved as a signal peptide. Residues 52-102 (KATGNLPPRPVHPGAAAASSGAEAPGEVGEAQAEKPMLVTESKGRGLKSRS) form a disordered region. The span at 64-82 (PGAAAASSGAEAPGEVGEA) shows a compositional bias: low complexity.

Belongs to the LptD family. As to quaternary structure, component of the lipopolysaccharide transport and assembly complex. Interacts with LptE and LptA.

The protein localises to the cell outer membrane. Its function is as follows. Together with LptE, is involved in the assembly of lipopolysaccharide (LPS) at the surface of the outer membrane. The protein is LPS-assembly protein LptD of Pseudomonas entomophila (strain L48).